Consider the following 289-residue polypeptide: Mas-related G-protein coupled receptor member G (289 aa).

The Extracellular portion of the chain corresponds to 1-13 (MFSIFNIWGTFNK). A helical membrane pass occupies residues 14–34 (VLFFLSLTVSLAGLVGNALLL). Topologically, residues 35 to 52 (WHLGLHIKKGPFNTYLLH) are cytoplasmic. Residues 53–73 (LAAADFLFLSCQVGFSIATIV) form a helical membrane-spanning segment. At 74–78 (SGHED) the chain is on the extracellular side. A helical membrane pass occupies residues 79–99 (TLYFPVTFLWFAVGLWLLAAF). Topologically, residues 100 to 120 (SVDCCLAYMFPSFCSPNRRPR) are cytoplasmic. The chain crosses the membrane as a helical span at residues 121–141 (FTSVVLCLVIWALTMPAVLLP). The Extracellular portion of the chain corresponds to 142–164 (ANACGLLKNGMSLLVCLKYHWTS). Residues 165–185 (VTWLAVLSGMACGASKFLLIF) traverse the membrane as a helical segment. Over 186–199 (GNCCSSQPPPKFCK) the chain is Cytoplasmic. Residues 200 to 220 (LAQCSGILLFFCRLPLVVYWC) form a helical membrane-spanning segment. Over 221–222 (LR) the chain is Extracellular. The chain crosses the membrane as a helical span at residues 223–243 (PVLKFLLPFFFPLATLLACID). The Cytoplasmic portion of the chain corresponds to 244-289 (SSAKPLLYYMKGRQLRKDPLQVALNRALGEESQSGLGGLSLPMHQV).

The protein belongs to the G-protein coupled receptor 1 family. Mas subfamily.

The protein localises to the cell membrane. Functionally, orphan receptor. May regulate nociceptor function and/or development, including the sensation or modulation of pain. The protein is Mas-related G-protein coupled receptor member G (Mrgprg) of Mus musculus (Mouse).